The sequence spans 397 residues: uncharacterized protein (397 aa).

Transmembrane regions (helical) follow at residues L255–A275, M284–A304, L308–L328, and V370–G390.

It is found in the cell membrane. This is an uncharacterized protein from Methanocaldococcus jannaschii (strain ATCC 43067 / DSM 2661 / JAL-1 / JCM 10045 / NBRC 100440) (Methanococcus jannaschii).